The chain runs to 361 residues: Queuine tRNA-ribosyltransferase (361 aa).

Aspartate 92 functions as the Proton acceptor in the catalytic mechanism. Substrate contacts are provided by residues 92-96 (DSGGF), aspartate 146, glutamine 189, and glycine 216. Residues 247-253 (GVGKPAD) are RNA binding. The active-site Nucleophile is the aspartate 266. The tract at residues 271 to 275 (TRSGR) is RNA binding; important for wobble base 34 recognition. Positions 304, 306, 309, and 335 each coordinate Zn(2+).

It belongs to the queuine tRNA-ribosyltransferase family. In terms of assembly, homodimer. Within each dimer, one monomer is responsible for RNA recognition and catalysis, while the other monomer binds to the replacement base PreQ1. Requires Zn(2+) as cofactor.

It catalyses the reaction 7-aminomethyl-7-carbaguanine + guanosine(34) in tRNA = 7-aminomethyl-7-carbaguanosine(34) in tRNA + guanine. It functions in the pathway tRNA modification; tRNA-queuosine biosynthesis. Functionally, catalyzes the base-exchange of a guanine (G) residue with the queuine precursor 7-aminomethyl-7-deazaguanine (PreQ1) at position 34 (anticodon wobble position) in tRNAs with GU(N) anticodons (tRNA-Asp, -Asn, -His and -Tyr). Catalysis occurs through a double-displacement mechanism. The nucleophile active site attacks the C1' of nucleotide 34 to detach the guanine base from the RNA, forming a covalent enzyme-RNA intermediate. The proton acceptor active site deprotonates the incoming PreQ1, allowing a nucleophilic attack on the C1' of the ribose to form the product. After dissociation, two additional enzymatic reactions on the tRNA convert PreQ1 to queuine (Q), resulting in the hypermodified nucleoside queuosine (7-(((4,5-cis-dihydroxy-2-cyclopenten-1-yl)amino)methyl)-7-deazaguanosine). The sequence is that of Queuine tRNA-ribosyltransferase from Rickettsia typhi (strain ATCC VR-144 / Wilmington).